Reading from the N-terminus, the 216-residue chain is MVAQITEGTAFDKHGRPFRRRNPRPAIVVVAFLVVVTCVMWTLALTRPPDVREAAVCNPPPQPAGSAPTNLGEQVSRTDMTDVAPAKLSDTKVHVLNASGRGGQAADIAGALQDLGFAQPTAANDPIYAGTRLDCQGQIRFGTAGQATAAALWLVAPCTELYHDSRADDSVDLALGTDFTTLAHNDDIDAVLANLRPGATEPSDPALLAKIHANSC.

Residues 25-45 traverse the membrane as a helical segment; sequence PAIVVVAFLVVVTCVMWTLAL.

Its subcellular location is the cell membrane. In terms of biological role, contributes to cell envelope integrity and virulence. In Mycobacterium tuberculosis (strain ATCC 25618 / H37Rv), this protein is Cell envelope integrity protein Cei.